The primary structure comprises 261 residues: DNA repair protein RecO (261 aa).

The protein belongs to the RecO family.

Its function is as follows. Involved in DNA repair and RecF pathway recombination. This is DNA repair protein RecO from Pelodictyon phaeoclathratiforme (strain DSM 5477 / BU-1).